Here is a 1157-residue protein sequence, read N- to C-terminus: Voltage-dependent calcium channel subunit alpha-2/delta-2 (1157 aa).

The signal sequence occupies residues 1–18; that stretch reads MAVPARTCGASWPGPVRT. Residues 1-37 form a disordered region; it reads MAVPARTCGASWPGPVRTARPWPGRGPRPCPDPRGPA. Residues 19–1119 lie on the Extracellular side of the membrane; the sequence is ARPWPGRGPR…TEDTSDCGRG (1101 aa). Residues 24-34 are compositionally biased toward pro residues; sequence GRGPRPCPDPR. N-linked (GlcNAc...) asparagine glycosylation occurs at Asn205. Positions 294–472 constitute a VWFA domain; it reads DMVIIVDVSG…INTQEYLDVL (179 aa). Residues Asp300, Ser302, and Ser304 each coordinate a divalent metal cation. The short motif at 300–304 is the MIDAS-like motif element; the sequence is DVSGS. N-linked (GlcNAc...) asparagine glycosylation is found at Asn389, Asn421, Asn510, Asn543, Asn627, and Asn864. Cys446 and Cys1104 form a disulfide bridge. One can recognise a Cache domain in the interval 488-577; the sequence is WTNVYEDALG…KPQITNFREP (90 aa). Residues 1120-1140 form a helical membrane-spanning segment; that stretch reads ASFPPSLGVLVSLQLLLLLGL. Topologically, residues 1141–1157 are cytoplasmic; that stretch reads PPRPQPQIHSFTPSRRL.

The protein belongs to the calcium channel subunit alpha-2/delta family. Dimer formed of alpha-2-2 and delta-2 chains; disulfide-linked. Voltage-dependent calcium channels are multisubunit complexes, consisting of alpha-1 (CACNA1), alpha-2 (CACNA2D), beta (CACNB) and delta (CACNA2D) subunits in a 1:1:1:1 ratio. Post-translationally, N-glycosylated. May be proteolytically processed into subunits alpha-2-2 and delta-2 that are disulfide-linked. It is however unclear whether such cleavage really takes place in vivo and has a functional role. In heart, it is highly expressed in atrium and at lower level in ventricle.

The protein localises to the membrane. Its function is as follows. The alpha-2/delta subunit of voltage-dependent calcium channels regulates calcium current density and activation/inactivation kinetics of the calcium channel. Acts as a regulatory subunit for P/Q-type calcium channel (CACNA1A), N-type (CACNA1B), L-type (CACNA1C OR CACNA1D) and possibly T-type (CACNA1G). Overexpression induces apoptosis. The polypeptide is Voltage-dependent calcium channel subunit alpha-2/delta-2 (Cacna2d2) (Rattus norvegicus (Rat)).